We begin with the raw amino-acid sequence, 322 residues long: 4-diphosphocytidyl-2-C-methyl-D-erythritol kinase (322 aa).

The active site involves lysine 25. Position 110–120 (110–120 (PVAGGMAGGSA)) interacts with ATP. The active site involves aspartate 152.

Belongs to the GHMP kinase family. IspE subfamily.

It carries out the reaction 4-CDP-2-C-methyl-D-erythritol + ATP = 4-CDP-2-C-methyl-D-erythritol 2-phosphate + ADP + H(+). The protein operates within isoprenoid biosynthesis; isopentenyl diphosphate biosynthesis via DXP pathway; isopentenyl diphosphate from 1-deoxy-D-xylulose 5-phosphate: step 3/6. Functionally, catalyzes the phosphorylation of the position 2 hydroxy group of 4-diphosphocytidyl-2C-methyl-D-erythritol. In Mycolicibacterium vanbaalenii (strain DSM 7251 / JCM 13017 / BCRC 16820 / KCTC 9966 / NRRL B-24157 / PYR-1) (Mycobacterium vanbaalenii), this protein is 4-diphosphocytidyl-2-C-methyl-D-erythritol kinase.